Here is a 483-residue protein sequence, read N- to C-terminus: Glutamyl-tRNA(Gln) amidotransferase subunit A (483 aa).

Active-site charge relay system residues include Lys-75 and Ser-150. Catalysis depends on Ser-174, which acts as the Acyl-ester intermediate.

Belongs to the amidase family. GatA subfamily. As to quaternary structure, heterotrimer of A, B and C subunits.

It carries out the reaction L-glutamyl-tRNA(Gln) + L-glutamine + ATP + H2O = L-glutaminyl-tRNA(Gln) + L-glutamate + ADP + phosphate + H(+). Allows the formation of correctly charged Gln-tRNA(Gln) through the transamidation of misacylated Glu-tRNA(Gln) in organisms which lack glutaminyl-tRNA synthetase. The reaction takes place in the presence of glutamine and ATP through an activated gamma-phospho-Glu-tRNA(Gln). This Microcystis aeruginosa (strain NIES-843 / IAM M-2473) protein is Glutamyl-tRNA(Gln) amidotransferase subunit A.